Reading from the N-terminus, the 658-residue chain is Probable CoA ligase CCL6 (658 aa).

ATP-binding positions include 226–234 (TSGATGEPK), 411–416 (QGYGLT), Asp497, 509–512 (IIDR), and Lys632. An SBD1 region spans residues 298-411 (DIRFLMDDLQ…RVTSCAALSQ (114 aa)). The tract at residues 412-477 (GYGLTESCGG…LRGTTLFSGY (66 aa)) is SBD2.

This sequence belongs to the ATP-dependent AMP-binding enzyme family. Mostly expressed in glandular trichomes (lupulin glands) after flowering, and, to a lower extent, in stems, leaves, cones and flowers.

It is found in the cytoplasm. The protein localises to the cytosol. In Humulus lupulus (European hop), this protein is Probable CoA ligase CCL6.